The primary structure comprises 520 residues: Tubby-related protein 2 (520 aa).

A phosphoserine mark is found at serine 135 and serine 190. The segment at 141 to 236 (EVSVENGSVS…GTNSSAAHNE (96 aa)) is disordered. Positions 211–223 (QKEEDLEKKREAS) are enriched in basic and acidic residues. Positions 224 to 233 (ESTGTNSSAA) are enriched in polar residues.

Belongs to the TUB family. In terms of tissue distribution, strongly expressed in testis. Also expressed in retina. Expressed in cancer cell lines.

It is found in the cytoplasm. Its subcellular location is the secreted. The protein is Tubby-related protein 2 (TULP2) of Homo sapiens (Human).